We begin with the raw amino-acid sequence, 398 residues long: Phosphoglycerate kinase (398 aa).

Substrate contacts are provided by residues 23-25 (DLN), Arg38, 61-64 (HFGR), Arg119, and Arg152. Residues Lys202, Glu324, and 354–357 (GGDT) contribute to the ATP site.

The protein belongs to the phosphoglycerate kinase family. Monomer.

The protein localises to the cytoplasm. It catalyses the reaction (2R)-3-phosphoglycerate + ATP = (2R)-3-phospho-glyceroyl phosphate + ADP. It functions in the pathway carbohydrate degradation; glycolysis; pyruvate from D-glyceraldehyde 3-phosphate: step 2/5. This Rhodopseudomonas palustris (strain ATCC BAA-98 / CGA009) protein is Phosphoglycerate kinase.